We begin with the raw amino-acid sequence, 798 residues long: Cation channel sperm-associated auxiliary subunit delta (798 aa).

The N-terminal stretch at 1-20 (MLMLMLVAAVTMWLRPLVTA) is a signal peptide. Residues 21 to 723 (QLCRSRTVRT…AFPVQLVSAG (703 aa)) lie on the Extracellular side of the membrane. 7 disulfide bridges follow: Cys23–Cys369, Cys59–Cys145, Cys144–Cys152, Cys387–Cys496, Cys510–Cys701, Cys525–Cys572, and Cys624–Cys652. N-linked (GlcNAc...) asparagine glycosylation occurs at Asn123. Residues Asn230, Asn240, Asn472, Asn538, and Asn630 are each glycosylated (N-linked (GlcNAc...) asparagine). A helical membrane pass occupies residues 724 to 745 (VVILLIISSILGSVWLAYKTPK). Residues 746–798 (LLRTARGRRIKKCATQLCRRCKTVCQFRASATARAGTEPPGRHRTPHGGRSDH) lie on the Cytoplasmic side of the membrane.

Belongs to the CATSPERD family. Component of the CatSper complex or CatSpermasome composed of the core pore-forming members CATSPER1, CATSPER2, CATSPER3 and CATSPER4 as well as auxiliary members CATSPERB, CATSPERG, CATSPERD, CATSPERE, CATSPERZ, C2CD6/CATSPERT, TMEM249, TMEM262 and EFCAB9. HSPA1 may be an additional auxiliary complex member. The core complex members CATSPER1, CATSPER2, CATSPER3 and CATSPER4 form a heterotetrameric channel. The auxiliary CATSPERB, CATSPERG, CATSPERD and CATSPERE subunits form a pavilion-like structure over the pore which stabilizes the complex through interactions with CATSPER4, CATSPER3, CATSPER1 and CATSPER2 respectively. TMEM262/CATSPERH interacts with CATSPERB, further stabilizing the complex. C2CD6/CATSPERT interacts at least with CATSPERD and is required for targeting the CatSper complex in the flagellar membrane.

It localises to the cell projection. Its subcellular location is the cilium. The protein localises to the flagellum membrane. Auxiliary component of the CatSper complex, a complex involved in sperm cell hyperactivation. Sperm cell hyperactivation is needed for sperm motility which is essential late in the preparation of sperm for fertilization. Required for CATSPER1 stability before intraflagellar transport and/or incorporation of the CatSper complex channel into the flagellar membrane. In Homo sapiens (Human), this protein is Cation channel sperm-associated auxiliary subunit delta.